The following is a 387-amino-acid chain: MGRVGVLLLNLGGPEKLEDVRPFLFNLFADPEIIRLPFPWLQKPLAWLISTLRAKKSQANYAEIGGGSPLLQITEAQASALTTRLERLGQDAKVYIGMRYWHPFTEEAVEKIKGDRLQRLVILPLYPHFSISTSGSSFRVLEEMWHNDPSLRQLDYSLIPSWYDHPGYLQAMADLIAQELKKFPNPDQAHIFFSAHGVPQSYVDEAGDPYQAEIEACTRLIMRTLDRPNQYTLAYQSRVGPVEWLKPYTEEALQKLGAEGIDDLLVVPISFVSEHIETLQEIDIEYREIAEEAGIDNFQRVPALNTHPVFIDALAQMVMDSLNDPPCTFETVPHPKKNMKMYPQERWEWGLTTAAEVWNGRLAMLGFIALLVELISGQGPLHFVGLL.

Residues 1-318 (MGRVGVLLLN…VFIDALAQMV (318 aa)) are ferrochelatase. Residues H196 and E277 each coordinate Fe cation. Residues 319–387 (MDSLNDPPCT…QGPLHFVGLL (69 aa)) are hlip domain.

It in the N-terminal section; belongs to the ferrochelatase family. In the C-terminal section; belongs to the Hlip family.

It is found in the cytoplasm. The catalysed reaction is heme b + 2 H(+) = protoporphyrin IX + Fe(2+). Its pathway is porphyrin-containing compound metabolism; protoheme biosynthesis; protoheme from protoporphyrin-IX: step 1/1. Catalyzes the ferrous insertion into protoporphyrin IX. In terms of biological role, the Hlip proteins might regulate tetrapyrrole biosynthesis, maybe at the level of aminolevulinic acid synthesis. Deletion of 4 to 5 members of the Hlip family (always including this member) suggests the proteins are involved in regulation of chlorophyll biosynthesis, in stabilization of chlorophyll-binding proteins and/or in reuse of chlorophylls, and may regulate tetrapyrrole biosynthesis. The Hlip proteins probably stabilize PSII assembly intermediates. The chain is Ferrochelatase from Synechocystis sp. (strain ATCC 27184 / PCC 6803 / Kazusa).